Consider the following 198-residue polypeptide: Small ribosomal subunit protein uS4 (198 aa).

The S4 RNA-binding domain occupies 88–153; it reads LRLDNVMFRM…AQRYKDILEV (66 aa).

It belongs to the universal ribosomal protein uS4 family. As to quaternary structure, part of the 30S ribosomal subunit. Contacts protein S5. The interaction surface between S4 and S5 is involved in control of translational fidelity.

One of the primary rRNA binding proteins, it binds directly to 16S rRNA where it nucleates assembly of the body of the 30S subunit. Functionally, with S5 and S12 plays an important role in translational accuracy. This is Small ribosomal subunit protein uS4 from Lachnoclostridium phytofermentans (strain ATCC 700394 / DSM 18823 / ISDg) (Clostridium phytofermentans).